The primary structure comprises 249 residues: MNVLSCSINTLIKEGLYEISGVEVGQHFYWQIGGFQVHAQVLITSWVVIAILLGSSVLAIRNPQTIPTDGQNFFEFVLEFIRDVSKTQIGEEYGPWVPFIGTLFLFIFVSNWSGALLPWKIIQLPQGELAAPTNDINTTVALALLTSVAYFYAGLSKKGLGYFSKYIQPTPILLPINILEDFTKPLSLSFRLFGNILADELVVVVLVSLVPLVVPIPVMFLGLFTSGIQALIFATLAAAYIGESMEGHH.

5 helical membrane passes run 40–60, 97–117, 136–156, 201–221, and 222–242; these read QVLI…VLAI, VPFI…GALL, INTT…AGLS, LVVV…VMFL, and GLFT…AYIG.

This sequence belongs to the ATPase A chain family. In terms of assembly, F-type ATPases have 2 components, CF(1) - the catalytic core - and CF(0) - the membrane proton channel. CF(1) has five subunits: alpha(3), beta(3), gamma(1), delta(1), epsilon(1). CF(0) has four main subunits: a, b, b' and c.

It localises to the plastid. The protein resides in the chloroplast thylakoid membrane. Its function is as follows. Key component of the proton channel; it plays a direct role in the translocation of protons across the membrane. This chain is ATP synthase subunit a, chloroplastic, found in Olimarabidopsis pumila (Dwarf rocket).